Consider the following 465-residue polypeptide: UDP-N-acetylmuramoylalanine--D-glutamate ligase (465 aa).

Position 124-130 (124-130) interacts with ATP; that stretch reads GSDGKTT.

The protein belongs to the MurCDEF family.

The protein resides in the cytoplasm. The enzyme catalyses UDP-N-acetyl-alpha-D-muramoyl-L-alanine + D-glutamate + ATP = UDP-N-acetyl-alpha-D-muramoyl-L-alanyl-D-glutamate + ADP + phosphate + H(+). It functions in the pathway cell wall biogenesis; peptidoglycan biosynthesis. Functionally, cell wall formation. Catalyzes the addition of glutamate to the nucleotide precursor UDP-N-acetylmuramoyl-L-alanine (UMA). The protein is UDP-N-acetylmuramoylalanine--D-glutamate ligase of Ruminiclostridium cellulolyticum (strain ATCC 35319 / DSM 5812 / JCM 6584 / H10) (Clostridium cellulolyticum).